Consider the following 500-residue polypeptide: Cytochrome c-552 (500 aa).

An N-terminal signal peptide occupies residues 1-24 (MKFLIKSLAVATISILGCLQTALA). Heme c is bound by residues H102, C130, C133, K134, C168, C171, H172, C217, C220, and H221. Ca(2+) is bound by residues E223, Y224, K268, and Q270. Y224 contacts substrate. Position 271 (H271) interacts with substrate. 9 residues coordinate heme c: H282, C289, C292, H293, H308, C321, C324, H325, and H400. Residues 477–500 (ARAKGLLPAEEADKPVAAPKAEAK) are disordered.

The protein belongs to the cytochrome c-552 family. Ca(2+) is required as a cofactor. It depends on heme c as a cofactor.

Its subcellular location is the periplasm. The catalysed reaction is 6 Fe(III)-[cytochrome c] + NH4(+) + 2 H2O = 6 Fe(II)-[cytochrome c] + nitrite + 8 H(+). It functions in the pathway nitrogen metabolism; nitrate reduction (assimilation). Functionally, catalyzes the reduction of nitrite to ammonia, consuming six electrons in the process. The sequence is that of Cytochrome c-552 from Mannheimia haemolytica (Pasteurella haemolytica).